The sequence spans 468 residues: MRISQFEGKAVALWGWGREGRGAYRALRAQLPTQSLTMFCNAEEVRELESLADAALHVETDASAQALGRFEIVVKSPGISPYRAEALAAAAQGTQFIGGTALWFAEHAQPDGSVPGAICVTGTKGKSTTTALLAHLLRVAGHRTALVGNIGQPLLEVLAPQPPPAYWAIELSSYQTGDVGRSGARPELAVVLNLFPEHLDWHGDEARYVRDKLSLVTEGRPRIVLLNAADPLLASLQLPDSEVLWFNHPEGWHLRGDVVYRGEQAIFDSADVPLPGVHNRRNLCAVLAALEALGLDAEALAPAALSFRPLPNRLQVLGSVDGISYVNDSISTTPYASLAALACFAQRRVALLVGGHDRGLDWHDFARHMAQQAPLEIVTMAANGPRIHALLAPLADAGRFGLHAANDLEHAMQLARDALGGQGGVVLLSPGAPSFGAYSDYVARGRHFAQLAGFDPAAISAIPGLGVH.

An ATP-binding site is contributed by 122-128 (GTKGKST).

It belongs to the MurCDEF family. MurD2 subfamily.

It localises to the cytoplasm. The catalysed reaction is UDP-N-acetyl-alpha-D-muramoyl-L-alanine + L-glutamate + ATP = UDP-N-acetyl-alpha-D-muramoyl-L-alanyl-L-glutamate + ADP + phosphate + H(+). Its pathway is cell wall biogenesis; peptidoglycan biosynthesis. In terms of biological role, cell wall formation. Catalyzes the addition of L-glutamate to the nucleotide precursor UDP-N-acetylmuramoyl-L-alanine. Has weak activity with D-glutamate. The sequence is that of UDP-N-acetylmuramoyl-L-alanine--L-glutamate ligase from Xanthomonas oryzae pv. oryzae (strain MAFF 311018).